The sequence spans 184 residues: MSTAWDTVWHACSVIEHALQASHLTYSEFSGVPDGLLRLVVELPGERRLKTNAILSIGEHSVHVEAFVCRKPDENHEGVYRFLLKRNRRLFCVSYTLDNVGDIYLVGRMSLASVDTDEIDRVLGQVLEAVESDFNTLLELGFRSSIQKEWDWRISRGESLNNLQAFAHLIDDEGDGDASIYARP.

It to M.tuberculosis Rv0487.

This is an uncharacterized protein from Mycobacterium leprae (strain TN).